We begin with the raw amino-acid sequence, 253 residues long: MLLDDQLKYWVLLPISIVMVLTGVLKQYIMTLITGSSANEAQPRVKLTEWQYLQWAQLLIGNGGNLSSDAFAAKKEFLVKDLTEERHLAKAKQQGGSQAGEVPNPFNDPNMSNAMMNMAKGNMASFIPQTIIMWWVNHFFAGFILMQLPFPLTAKFKEMLQTGIICQDLDVRWVSSISWYFISVLGLNPVYNLIGLNDQDMGIQAGIGGPQGPQGPPQSQVDKAMHAMANDLTIIQHETCLDNVEQRVLKQYM.

A run of 3 helical transmembrane segments spans residues 10–30 (WVLLPISIVMVLTGVLKQYIM), 126–146 (FIPQTIIMWWVNHFFAGFILM), and 176–196 (SISWYFISVLGLNPVYNLIGL).

The protein belongs to the EMC3 family. Component of the ER membrane protein complex (EMC), which is composed of EMC1, EMC2, EMC3, EMC4, EMC5 and EMC6.

It localises to the endoplasmic reticulum membrane. The EMC seems to be required for efficient folding of proteins in the endoplasmic reticulum (ER). The protein is ER membrane protein complex subunit 3 (AIM27) of Saccharomyces cerevisiae (strain RM11-1a) (Baker's yeast).